Consider the following 857-residue polypeptide: Potassium channel AKT1 (857 aa).

Residues 1 to 61 lie on the Cytoplasmic side of the membrane; sequence MRGGALLCGQ…PYDHKYRIWE (61 aa). The chain crosses the membrane as a helical span at residues 62 to 82; that stretch reads AFLVVLVVYTAWVSPFEFGFL. Over 83-90 the chain is Extracellular; that stretch reads RKPRPPLS. A helical membrane pass occupies residues 91–111; that stretch reads ITDNIVNAFFAIDIIMTFFVG. Residues 112-134 lie on the Cytoplasmic side of the membrane; it reads YLDKSTYLIVDDRKQIAFKYLRS. The chain crosses the membrane as a helical span at residues 135–155; that stretch reads WFLLDLVSTIPSEAAMRISSQ. Over 156–158 the chain is Extracellular; it reads SYG. The helical; Voltage-sensor transmembrane segment at 159 to 179 threads the bilayer; the sequence is LFNMLRLWRLRRVGALFARLE. Residues 180–193 lie on the Cytoplasmic side of the membrane; it reads KDRNFNYFWVRCAK. Residues 194–214 form a helical membrane-spanning segment; sequence LVCVTLFAVHCAACFYYLIAA. The Extracellular portion of the chain corresponds to 215–241; the sequence is RNSNPAKTWIGANVANFLEESLWMRYV. The pore-forming intramembrane region spans 242–261; the sequence is TSMYWSITTLTTVGYGDLHP. The Extracellular portion of the chain corresponds to 262–265; that stretch reads VNTK. Residues 266 to 286 form a helical membrane-spanning segment; the sequence is EMIFDIFYMLFNLGLTAYLIG. Residues 287-857 are Cytoplasmic-facing; it reads NMTNLVVHGT…GDHLIFATDS (571 aa). 372 to 493 is a binding site for a nucleoside 3',5'-cyclic phosphate; the sequence is LFRGVSNDLL…IMNNLLQHLK (122 aa). ANK repeat units follow at residues 515 to 546, 550 to 579, 583 to 612, 614 to 643, 647 to 676, and 680 to 709; these read KMDLPLNLCFAAIREDDLLLHQLLKRGLDPNE, NGRTPLHIAASKGTLNCVLLLLEYHADPNC, EGSVPLWEAMVEGHEKVVKVLLEHGSTIDA, DVGHFACTAAEQGNLKLLKEIVLHGGDVTR, TGTSALHTAVCEENIEMVKYLLEQGADVNK, and HGWTPRDLAEQQGHEDIKALFREKLHERRV. The KHA domain occupies 790 to 857; the sequence is RVTISCAEKD…GDHLIFATDS (68 aa).

The protein belongs to the potassium channel family. Plant (TC 1.A.1.4) subfamily. The potassium channel is probably composed of a homo- or heterotetrameric complex of pore-forming subunits. Possible heteromultimer with AKT2 or KAT3. Part of a K(+)-channel calcium-sensing kinase/phosphatase complex composed by a calcium sensor CBL (CBL1, CBL2, CBL3 or CBL9), a kinase CIPK (CIPK6, CIPK16 or CIPK23), a phosphatase PP2C (AIP1) and a K(+)-channel (AKT1). Interacts directly with AIP1, CBL10, CIPK6, CIPK16 and CIPK23. In terms of processing, phosphorylated by CIPK proteins CIPK6, CIPK16 and CIPK23. The activation by phosphorylation is induced by low K(+) conditions and stimulates K(+) uptake and relocation. Dephosphorylation by AIP1 repressed the transport activity. In terms of tissue distribution, preferentially expressed in the peripheral cell layers of root mature including root cortex and root hairs. Detected also, at a lower level, in the mesophyll of the leaves and at restricted sites corresponding to hydathodes and guard cells.

The protein resides in the cell membrane. Its function is as follows. Highly selective inward-rectifying potassium channel that mediate potassium uptake by plant roots in response to low K(+) conditions, by a calcium-, CBL-, and CIPK-dependent pathway. Positively regulated by phosphorylation by CIPK23. Negatively regulated by a kinase-independent regulatory mechanism involving a competing direct binding of CBL10. Involved in the stomatal regulation by monitoring the turgor pressure in guard cells. Assuming opened or closed conformations in response to the voltage difference across the membrane, the channel is activated by hyperpolarization. May interact with the cytoskeleton or with regulatory proteins. Is essential with POT5/HAK5 for high-affinity potassium uptake in roots during seedling establishment and postgermination growth under low potassium conditions. The polypeptide is Potassium channel AKT1 (AKT1) (Arabidopsis thaliana (Mouse-ear cress)).